A 188-amino-acid polypeptide reads, in one-letter code: 3-deoxy-D-manno-octulosonate 8-phosphate phosphatase KdsC (188 aa).

Residues D32 and D34 each coordinate Mg(2+). Substrate is bound by residues D34, 55–59 (NVRDG), R63, R78, R86, and K102. D125 provides a ligand contact to Mg(2+).

The protein belongs to the KdsC family. As to quaternary structure, homotetramer. Mg(2+) serves as cofactor.

It carries out the reaction 3-deoxy-alpha-D-manno-2-octulosonate-8-phosphate + H2O = 3-deoxy-alpha-D-manno-oct-2-ulosonate + phosphate. It functions in the pathway carbohydrate biosynthesis; 3-deoxy-D-manno-octulosonate biosynthesis; 3-deoxy-D-manno-octulosonate from D-ribulose 5-phosphate: step 3/3. The protein operates within bacterial outer membrane biogenesis; lipopolysaccharide biosynthesis. Its function is as follows. Catalyzes the hydrolysis of 3-deoxy-D-manno-octulosonate 8-phosphate (KDO 8-P) to 3-deoxy-D-manno-octulosonate (KDO) and inorganic phosphate. In Escherichia coli (strain K12), this protein is 3-deoxy-D-manno-octulosonate 8-phosphate phosphatase KdsC.